Consider the following 750-residue polypeptide: Amyloid-beta A4 precursor protein-binding family A member 2 (750 aa).

Disordered stretches follow at residues 1–94 (MAHR…PEEE) and 143–346 (DSVG…IPET). Serine 11 is modified (phosphoserine). Positions 70-80 (GDSSSDYVNNT) are enriched in polar residues. A compositionally biased stretch (acidic residues) spans 81 to 94 (SEEEDYDEGLPEEE). The STXBP1-binding stretch occupies residues 185-271 (HYCSSKESYQ…STEACPPSDT (87 aa)). Residue serine 209 is modified to Phosphoserine. The segment covering 219–228 (DLEEQEEDID) has biased composition (acidic residues). Polar residues-rich tracts occupy residues 238 to 248 (LSMTSITSASE) and 332 to 344 (SDLN…NNIP). Residues 367–556 (LIDGIIFAAN…IINTQEMYND (190 aa)) form the PID domain. PDZ domains lie at 569 to 654 (ELQL…NIVS) and 660 to 736 (TVLI…MPAA).

Part of a multimeric complex containing STXBP1 and syntaxin-1. Binds to the cytoplasmic domain of amyloid-beta protein, and to the nuclear factor NF-kappa-B/p65 via its PDZ domain. Interacts with the N-terminal domain of NECAB3. Specifically expressed in neurons, predominantly of the cerebellum, hippocampus, and spinal cord. Lesser extent in neurons of the cerebral cortex and anterior thalmic nuclei.

Functionally, putative function in synaptic vesicle exocytosis by binding to STXBP1, an essential component of the synaptic vesicle exocytotic machinery. May modulate processing of the amyloid-beta precursor protein (APP) and hence formation of APP-beta. The polypeptide is Amyloid-beta A4 precursor protein-binding family A member 2 (Apba2) (Mus musculus (Mouse)).